The following is a 382-amino-acid chain: Protein delta homolog 2 (382 aa).

The N-terminal stretch at 1-26 (MPSGCRCLNLVCLLCILGATSQPARA) is a signal peptide. 4 consecutive EGF-like domains span residues 27–58 (DDCSSHCDLAHGCCAPDGSCRCDPGWEGLHCE), 62–89 (RMPGCQHGTCHQPWQCICHSGWAGKFCD), 91–129 (DEHICTSQSPCQNGGQCVYDGGGEYHCVCLPGFRGRGCE), and 131–172 (KAGP…AHCE). Over 27–305 (DDCSSHCDLA…RQEAGLGESS (279 aa)) the chain is Extracellular. 17 disulfides stabilise this stretch: Cys-29/Cys-40, Cys-33/Cys-46, Cys-48/Cys-57, Cys-66/Cys-71, Cys-79/Cys-88, Cys-95/Cys-107, Cys-101/Cys-117, Cys-119/Cys-128, Cys-135/Cys-148, Cys-142/Cys-160, Cys-162/Cys-171, Cys-178/Cys-189, Cys-183/Cys-198, Cys-200/Cys-209, Cys-216/Cys-227, Cys-221/Cys-236, and Cys-238/Cys-247. Residue Asn-157 is glycosylated (N-linked (GlcNAc...) asparagine). The EGF-like 5; calcium-binding domain occupies 174-210 (NVDDCLMRPCANGATCIDGINRFSCLCPEGFAGRFCT). Residues 212–248 (NLDDCASRPCQRGARCRDRVHDFDCLCPSGYGGKTCE) form the EGF-like 6; calcium-binding domain. Residues 306-326 (LVALVVFGSLTAALVLATVLL) traverse the membrane as a helical segment. The Cytoplasmic segment spans residues 327–382 (TLRAWRRGICPTGPCCDPAPHYAPARQDQECQVSMLPAGFPLSPDLPPEPGKTTAL).

It localises to the membrane. Functionally, regulates adipogenesis. This chain is Protein delta homolog 2 (Dlk2), found in Rattus norvegicus (Rat).